We begin with the raw amino-acid sequence, 138 residues long: Large ribosomal subunit protein bL17 (138 aa).

It belongs to the bacterial ribosomal protein bL17 family. As to quaternary structure, part of the 50S ribosomal subunit. Contacts protein L32.

The polypeptide is Large ribosomal subunit protein bL17 (Methylorubrum extorquens (strain PA1) (Methylobacterium extorquens)).